Consider the following 241-residue polypeptide: ATP synthase subunit a (241 aa).

8 helical membrane-spanning segments follow: residues 29–49, 54–74, 86–106, 114–134, 153–173, 177–197, 200–220, and 221–241; these read NSSF…LFGI, VIPG…ISII, IPLI…GVLP, HVIV…IVGF, WLAP…PVSL, LAAN…FIVN, IFFT…EVFV, and AILQ…DAVK.

The protein belongs to the ATPase A chain family. F-type ATPases have 2 components, CF(1) - the catalytic core - and CF(0) - the membrane proton channel. CF(1) has five subunits: alpha(3), beta(3), gamma(1), delta(1), epsilon(1). CF(0) has three main subunits: a(1), b(2) and c(9-12). The alpha and beta chains form an alternating ring which encloses part of the gamma chain. CF(1) is attached to CF(0) by a central stalk formed by the gamma and epsilon chains, while a peripheral stalk is formed by the delta and b chains.

The protein resides in the cell membrane. Key component of the proton channel; it plays a direct role in the translocation of protons across the membrane. The polypeptide is ATP synthase subunit a (Wolbachia pipientis wMel).